Here is a 335-residue protein sequence, read N- to C-terminus: uncharacterized protein (335 aa).

3 Solcar repeats span residues 22-129 (VKPI…LLPL), 134-227 (GFPA…IRLF), and 244-327 (KDLY…TKKY). The next 6 membrane-spanning stretches (helical) occupy residues 28-48 (MLSA…LDVV), 104-123 (GLVP…FLGY), 133-154 (WGFP…ATIV), 195-219 (GILN…FYWW), 246-263 (LYIN…ATLL), and 307-323 (CVKV…SYHL).

It belongs to the mitochondrial carrier (TC 2.A.29) family.

Its subcellular location is the mitochondrion inner membrane. This is an uncharacterized protein from Schizosaccharomyces pombe (strain 972 / ATCC 24843) (Fission yeast).